The chain runs to 481 residues: ATP synthase subunit beta (481 aa).

ATP is bound at residue 154–161; the sequence is GGAGVGKT.

It belongs to the ATPase alpha/beta chains family. In terms of assembly, F-type ATPases have 2 components, CF(1) - the catalytic core - and CF(0) - the membrane proton channel. CF(1) has five subunits: alpha(3), beta(3), gamma(1), delta(1), epsilon(1). CF(0) has three main subunits: a(1), b(2) and c(9-12). The alpha and beta chains form an alternating ring which encloses part of the gamma chain. CF(1) is attached to CF(0) by a central stalk formed by the gamma and epsilon chains, while a peripheral stalk is formed by the delta and b chains.

The protein resides in the cell inner membrane. It catalyses the reaction ATP + H2O + 4 H(+)(in) = ADP + phosphate + 5 H(+)(out). Its function is as follows. Produces ATP from ADP in the presence of a proton gradient across the membrane. The catalytic sites are hosted primarily by the beta subunits. This is ATP synthase subunit beta from Novosphingobium aromaticivorans (strain ATCC 700278 / DSM 12444 / CCUG 56034 / CIP 105152 / NBRC 16084 / F199).